Reading from the N-terminus, the 418-residue chain is Phosphatidylcholine:ceramide cholinephosphotransferase 1 (418 aa).

One can recognise an SAM domain in the interval 12 to 75 (WSPKKVADWL…LDMIETLKME (64 aa)). At serine 13 the chain carries Phosphoserine. 5 helical membrane-spanning segments follow: residues 141 to 161 (FLAF…ISVV), 189 to 209 (FSIC…QWLL), 220 to 240 (FFCI…VTTL), 281 to 301 (MCGD…YLFI), and 309 to 329 (LWWY…CILL). Histidine 290 is a catalytic residue. Residues histidine 333 and aspartate 337 contribute to the active site. The helical transmembrane segment at 335–352 (TVDVVVAYYITTRLFWWY) threads the bilayer.

Belongs to the sphingomyelin synthase family. As to expression, widely expressed. Highest expression in the cardiovascular system.

The protein localises to the golgi apparatus membrane. It carries out the reaction an N-acylsphing-4-enine + a 1,2-diacyl-sn-glycero-3-phosphocholine = a sphingomyelin + a 1,2-diacyl-sn-glycerol. The catalysed reaction is 1-(9Z-octadecenoyl)-2-acyl-sn-3-glycerol + a sphingomyelin = a 1-(9Z-octadecenoyl)-2-acyl-sn-glycero-3-phosphocholine + an N-acylsphing-4-enine. It catalyses the reaction N-hexadecanoylsphinganine + a 1,2-diacyl-sn-glycero-3-phosphocholine = N-hexadecanoyl-sphinganine-1-phosphocholine + a 1,2-diacyl-sn-glycerol. The enzyme catalyses N-hexadecanoyl-(4R)-hydroxysphinganine + a 1,2-diacyl-sn-glycero-3-phosphocholine = N-hexadecanoyl-(4R)-hydroxysphinganine-phosphocholine + a 1,2-diacyl-sn-glycerol. It carries out the reaction an N-acylsphing-4-enine + a 1,2-diacyl-sn-glycero-3-phosphoethanolamine = an N-acylsphing-4-enine 1-phosphoethanolamine + a 1,2-diacyl-sn-glycerol. The protein operates within sphingolipid metabolism. Functionally, major sphingomyelin synthase at the Golgi apparatus. Catalyzes the reversible transfer of phosphocholine moiety in sphingomyelin biosynthesis: in the forward reaction transfers phosphocholine head group of phosphatidylcholine (PC) on to ceramide (CER) to form ceramide phosphocholine (sphingomyelin, SM) and diacylglycerol (DAG) as by-product, and in the reverse reaction transfers phosphocholine from SM to DAG to form PC and CER. The direction of the reaction depends on the levels of CER and DAG in Golgi membranes. Converts the newly synthesized CER, that is transported from the endoplasmic reticulum to the trans-Golgi by the Cer transport protein (CERT), to SM. Can form a heteromeric complex with glucosylceramide synthase (GCS) increasing SMS activity and reducing glucosylceramide synthesis, a critical mechanism that controls the metabolic fate of CER in the Golgi. Does not use free phosphorylcholine or CDP-choline as donor. Can also transfer phosphoethanolamine head group of phosphatidylethanolamine (PE) on to CER to form ceramide phosphoethanolamine (CPE). Regulates receptor-mediated signal transduction via mitogenic DAG and proapoptotic CER, as well as via SM, a structural component of membrane rafts that serve as platforms for signal transduction and protein sorting. Plays a role in secretory transport via regulation of DAG pool at the Golgi apparatus and its downstream effects on PRKD1. The sequence is that of Phosphatidylcholine:ceramide cholinephosphotransferase 1 (SGMS1) from Sus scrofa (Pig).